A 414-amino-acid polypeptide reads, in one-letter code: CinA-like protein (414 aa).

It belongs to the CinA family.

In Geobacter sp. (strain M21), this protein is CinA-like protein.